The following is a 359-amino-acid chain: Chorismate synthase (359 aa).

Arg-47 is an NADP(+) binding site. FMN-binding positions include 123-125, Gly-283, 298-302, and Arg-326; these read RSS and KPTSS.

This sequence belongs to the chorismate synthase family. In terms of assembly, homotetramer. Requires FMNH2 as cofactor.

It catalyses the reaction 5-O-(1-carboxyvinyl)-3-phosphoshikimate = chorismate + phosphate. The protein operates within metabolic intermediate biosynthesis; chorismate biosynthesis; chorismate from D-erythrose 4-phosphate and phosphoenolpyruvate: step 7/7. Its function is as follows. Catalyzes the anti-1,4-elimination of the C-3 phosphate and the C-6 proR hydrogen from 5-enolpyruvylshikimate-3-phosphate (EPSP) to yield chorismate, which is the branch point compound that serves as the starting substrate for the three terminal pathways of aromatic amino acid biosynthesis. This reaction introduces a second double bond into the aromatic ring system. This chain is Chorismate synthase, found in Chlamydia pneumoniae (Chlamydophila pneumoniae).